Consider the following 513-residue polypeptide: ATP synthase subunit alpha (513 aa).

Residue 169–176 (GDRQTGKT) coordinates ATP.

This sequence belongs to the ATPase alpha/beta chains family. As to quaternary structure, F-type ATPases have 2 components, CF(1) - the catalytic core - and CF(0) - the membrane proton channel. CF(1) has five subunits: alpha(3), beta(3), gamma(1), delta(1), epsilon(1). CF(0) has three main subunits: a(1), b(2) and c(9-12). The alpha and beta chains form an alternating ring which encloses part of the gamma chain. CF(1) is attached to CF(0) by a central stalk formed by the gamma and epsilon chains, while a peripheral stalk is formed by the delta and b chains.

The protein resides in the cell inner membrane. The enzyme catalyses ATP + H2O + 4 H(+)(in) = ADP + phosphate + 5 H(+)(out). Functionally, produces ATP from ADP in the presence of a proton gradient across the membrane. The alpha chain is a regulatory subunit. This chain is ATP synthase subunit alpha, found in Salmonella paratyphi C (strain RKS4594).